Reading from the N-terminus, the 235-residue chain is Uracil-DNA glycosylase (235 aa).

The Proton acceptor role is filled by Asp71.

Belongs to the uracil-DNA glycosylase (UDG) superfamily. UNG family.

The protein resides in the cytoplasm. The enzyme catalyses Hydrolyzes single-stranded DNA or mismatched double-stranded DNA and polynucleotides, releasing free uracil.. In terms of biological role, excises uracil residues from the DNA which can arise as a result of misincorporation of dUMP residues by DNA polymerase or due to deamination of cytosine. The polypeptide is Uracil-DNA glycosylase (Campylobacter hominis (strain ATCC BAA-381 / DSM 21671 / CCUG 45161 / LMG 19568 / NCTC 13146 / CH001A)).